A 190-amino-acid polypeptide reads, in one-letter code: Potassium-transporting ATPase KdpC subunit (190 aa).

Residues 15–35 traverse the membrane as a helical segment; it reads LWILTALIYPAIVLVIGQLVF.

The protein belongs to the KdpC family. The system is composed of three essential subunits: KdpA, KdpB and KdpC.

Its subcellular location is the cell inner membrane. Part of the high-affinity ATP-driven potassium transport (or Kdp) system, which catalyzes the hydrolysis of ATP coupled with the electrogenic transport of potassium into the cytoplasm. This subunit acts as a catalytic chaperone that increases the ATP-binding affinity of the ATP-hydrolyzing subunit KdpB by the formation of a transient KdpB/KdpC/ATP ternary complex. This Synechocystis sp. (strain ATCC 27184 / PCC 6803 / Kazusa) protein is Potassium-transporting ATPase KdpC subunit.